Reading from the N-terminus, the 439-residue chain is Cobyrinate a,c-diamide synthase (439 aa).

A disordered region spans residues glutamate 214–aspartate 235. The GATase cobBQ-type domain maps to arginine 237–phenylalanine 428. Cysteine 317 (nucleophile) is an active-site residue.

Belongs to the CobB/CbiA family. Mg(2+) serves as cofactor.

The catalysed reaction is cob(II)yrinate + 2 L-glutamine + 2 ATP + 2 H2O = cob(II)yrinate a,c diamide + 2 L-glutamate + 2 ADP + 2 phosphate + 2 H(+). It functions in the pathway cofactor biosynthesis; adenosylcobalamin biosynthesis; cob(II)yrinate a,c-diamide from sirohydrochlorin (anaerobic route): step 10/10. In terms of biological role, catalyzes the ATP-dependent amidation of the two carboxylate groups at positions a and c of cobyrinate, using either L-glutamine or ammonia as the nitrogen source. The polypeptide is Cobyrinate a,c-diamide synthase (Haloarcula marismortui (strain ATCC 43049 / DSM 3752 / JCM 8966 / VKM B-1809) (Halobacterium marismortui)).